Here is a 208-residue protein sequence, read N- to C-terminus: N-(5'-phosphoribosyl)anthranilate isomerase (208 aa).

It belongs to the TrpF family.

The catalysed reaction is N-(5-phospho-beta-D-ribosyl)anthranilate = 1-(2-carboxyphenylamino)-1-deoxy-D-ribulose 5-phosphate. Its pathway is amino-acid biosynthesis; L-tryptophan biosynthesis; L-tryptophan from chorismate: step 3/5. The polypeptide is N-(5'-phosphoribosyl)anthranilate isomerase (Desulforamulus reducens (strain ATCC BAA-1160 / DSM 100696 / MI-1) (Desulfotomaculum reducens)).